A 197-amino-acid polypeptide reads, in one-letter code: Ribonuclease HII (197 aa).

The RNase H type-2 domain maps to 11 to 197; it reads GRIAGVDEVG…FGPVKRVLGL (187 aa). Positions 17, 18, and 109 each coordinate a divalent metal cation.

Belongs to the RNase HII family. Mn(2+) serves as cofactor. Mg(2+) is required as a cofactor.

It localises to the cytoplasm. The enzyme catalyses Endonucleolytic cleavage to 5'-phosphomonoester.. Endonuclease that specifically degrades the RNA of RNA-DNA hybrids. This Edwardsiella ictaluri (strain 93-146) protein is Ribonuclease HII.